The primary structure comprises 248 residues: 2,3-bisphosphoglycerate-dependent phosphoglycerate mutase (248 aa).

Substrate contacts are provided by residues 8–15 (RHGESTWN), 21–22 (TG), R60, 87–90 (ERHY), K98, 114–115 (RR), and 183–184 (GN). The active-site Tele-phosphohistidine intermediate is H9. E87 functions as the Proton donor/acceptor in the catalytic mechanism.

It belongs to the phosphoglycerate mutase family. BPG-dependent PGAM subfamily. As to quaternary structure, homodimer.

It carries out the reaction (2R)-2-phosphoglycerate = (2R)-3-phosphoglycerate. Its pathway is carbohydrate degradation; glycolysis; pyruvate from D-glyceraldehyde 3-phosphate: step 3/5. Functionally, catalyzes the interconversion of 2-phosphoglycerate and 3-phosphoglycerate. In Cupriavidus pinatubonensis (strain JMP 134 / LMG 1197) (Cupriavidus necator (strain JMP 134)), this protein is 2,3-bisphosphoglycerate-dependent phosphoglycerate mutase.